Reading from the N-terminus, the 157-residue chain is S-ribosylhomocysteine lyase (157 aa).

Positions 54, 58, and 124 each coordinate Fe cation.

It belongs to the LuxS family. In terms of assembly, homodimer. Requires Fe cation as cofactor.

It carries out the reaction S-(5-deoxy-D-ribos-5-yl)-L-homocysteine = (S)-4,5-dihydroxypentane-2,3-dione + L-homocysteine. In terms of biological role, involved in the synthesis of autoinducer 2 (AI-2) which is secreted by bacteria and is used to communicate both the cell density and the metabolic potential of the environment. The regulation of gene expression in response to changes in cell density is called quorum sensing. Catalyzes the transformation of S-ribosylhomocysteine (RHC) to homocysteine (HC) and 4,5-dihydroxy-2,3-pentadione (DPD). The sequence is that of S-ribosylhomocysteine lyase from Pediococcus pentosaceus (strain ATCC 25745 / CCUG 21536 / LMG 10740 / 183-1w).